The sequence spans 382 residues: Glutamyl-tRNA reductase (382 aa).

Substrate contacts are provided by residues T38 to R41, S85, E90 to Q92, and Q96. C39 acts as the Nucleophile in catalysis. G164–G169 provides a ligand contact to NADP(+).

Belongs to the glutamyl-tRNA reductase family. As to quaternary structure, homodimer.

It carries out the reaction (S)-4-amino-5-oxopentanoate + tRNA(Glu) + NADP(+) = L-glutamyl-tRNA(Glu) + NADPH + H(+). The protein operates within porphyrin-containing compound metabolism; protoporphyrin-IX biosynthesis; 5-aminolevulinate from L-glutamyl-tRNA(Glu): step 1/2. Its function is as follows. Catalyzes the NADPH-dependent reduction of glutamyl-tRNA(Glu) to glutamate 1-semialdehyde (GSA). This Methanococcus maripaludis (strain DSM 14266 / JCM 13030 / NBRC 101832 / S2 / LL) protein is Glutamyl-tRNA reductase.